A 101-amino-acid chain; its full sequence is Ascorbate-specific PTS system EIIB component (101 aa).

The 100-residue stretch at 1 to 100 (MTVRILAVCG…VIKEHFPQDV (100 aa)) folds into the PTS EIIB type-2 domain. Catalysis depends on Cys-9, which acts as the Phosphocysteine intermediate. Cys-9 is subject to Phosphocysteine.

The protein localises to the cytoplasm. The enzyme catalyses N(pros)-phospho-L-histidyl-[protein] + L-ascorbate(out) = L-ascorbate 6-phosphate(in) + L-histidyl-[protein]. In terms of biological role, the phosphoenolpyruvate-dependent sugar phosphotransferase system (sugar PTS), a major carbohydrate active transport system, catalyzes the phosphorylation of incoming sugar substrates concomitantly with their translocation across the cell membrane. The enzyme II UlaABC PTS system is involved in ascorbate transport. This chain is Ascorbate-specific PTS system EIIB component (ulaB), found in Escherichia coli O157:H7.